Here is a 276-residue protein sequence, read N- to C-terminus: MPELPEVETVRRGLEKLVLNKKIKDIRVLYSKTIVNEESEFIEKLTNKTIKKIDRRGKYLLFRFSSDLTMISHLRMEGKYFVEPSTKEVEKHTHVVFDFTDGTSLRYNDVRKFGRMQLVKTGMEIQTAGLAKLGPEPKEKTFIVEDFSKNLKRRKKAIKNALLDQTIVAGLGNIYADEVLWMSKIHPETPANKLTEEEVKVLRDNIIKELALATEAGGTTIRSYTDAFRHSGGFQFSLHAYQRTGDPCERCGTPIQRIVVGQRGTHFCPKCQVVKS.

The Schiff-base intermediate with DNA role is filled by Pro-2. Residue Glu-3 is the Proton donor of the active site. Lys-58 acts as the Proton donor; for beta-elimination activity in catalysis. DNA contacts are provided by His-92, Arg-111, and Arg-154. Residues 239-273 (HAYQRTGDPCERCGTPIQRIVVGQRGTHFCPKCQV) form an FPG-type zinc finger. Arg-263 acts as the Proton donor; for delta-elimination activity in catalysis.

The protein belongs to the FPG family. As to quaternary structure, monomer. Zn(2+) serves as cofactor.

The catalysed reaction is Hydrolysis of DNA containing ring-opened 7-methylguanine residues, releasing 2,6-diamino-4-hydroxy-5-(N-methyl)formamidopyrimidine.. It carries out the reaction 2'-deoxyribonucleotide-(2'-deoxyribose 5'-phosphate)-2'-deoxyribonucleotide-DNA = a 3'-end 2'-deoxyribonucleotide-(2,3-dehydro-2,3-deoxyribose 5'-phosphate)-DNA + a 5'-end 5'-phospho-2'-deoxyribonucleoside-DNA + H(+). Functionally, involved in base excision repair of DNA damaged by oxidation or by mutagenic agents. Acts as a DNA glycosylase that recognizes and removes damaged bases. Has a preference for oxidized purines, such as 7,8-dihydro-8-oxoguanine (8-oxoG). Has AP (apurinic/apyrimidinic) lyase activity and introduces nicks in the DNA strand. Cleaves the DNA backbone by beta-delta elimination to generate a single-strand break at the site of the removed base with both 3'- and 5'-phosphates. This Ligilactobacillus salivarius (strain UCC118) (Lactobacillus salivarius) protein is Formamidopyrimidine-DNA glycosylase.